We begin with the raw amino-acid sequence, 602 residues long: Probable pectinesterase/pectinesterase inhibitor 64 (602 aa).

The chain crosses the membrane as a helical span at residues 36–56 (ILIIIAASCILLLLISLLIYA). The segment at 62–91 (SRNHHNPSHQTPTSDDHPPPETPPSPPPIA) is disordered. Over residues 81–90 (PETPPSPPPI) the composition is skewed to pro residues. Residues 87 to 237 (PPPIAQIRLA…VNLTGNALSM (151 aa)) form a pectinesterase inhibitor 64 region. N-linked (GlcNAc...) asparagine glycosylation is found at N98, N156, N212, N229, and N315. A pectinesterase 64 region spans residues 288-595 (DVTVCKNGGK…YSVANFIQAD (308 aa)). 2 residues coordinate substrate: T367 and Q397. The Proton donor; for pectinesterase activity role is filled by D420. C434 and C454 are oxidised to a cystine. D441 functions as the Nucleophile; for pectinesterase activity in the catalytic mechanism. Residues N492 and N496 are each glycosylated (N-linked (GlcNAc...) asparagine). Residues R518 and W520 each coordinate substrate.

The protein in the N-terminal section; belongs to the PMEI family. It in the C-terminal section; belongs to the pectinesterase family. In terms of tissue distribution, expressed in siliques.

It localises to the membrane. The catalysed reaction is [(1-&gt;4)-alpha-D-galacturonosyl methyl ester](n) + n H2O = [(1-&gt;4)-alpha-D-galacturonosyl](n) + n methanol + n H(+). Its pathway is glycan metabolism; pectin degradation; 2-dehydro-3-deoxy-D-gluconate from pectin: step 1/5. Its function is as follows. Acts in the modification of cell walls via demethylesterification of cell wall pectin. The polypeptide is Probable pectinesterase/pectinesterase inhibitor 64 (PME64) (Arabidopsis thaliana (Mouse-ear cress)).